We begin with the raw amino-acid sequence, 132 residues long: Small ribosomal subunit protein uS8 (132 aa).

It belongs to the universal ribosomal protein uS8 family. In terms of assembly, part of the 30S ribosomal subunit. Contacts proteins S5 and S12.

Functionally, one of the primary rRNA binding proteins, it binds directly to 16S rRNA central domain where it helps coordinate assembly of the platform of the 30S subunit. This is Small ribosomal subunit protein uS8 from Geobacter sulfurreducens (strain ATCC 51573 / DSM 12127 / PCA).